The primary structure comprises 58 residues: Small ribosomal subunit protein bS21B (58 aa).

It belongs to the bacterial ribosomal protein bS21 family.

This is Small ribosomal subunit protein bS21B from Trichormus variabilis (strain ATCC 29413 / PCC 7937) (Anabaena variabilis).